Reading from the N-terminus, the 222-residue chain is Sigma non-opioid intracellular receptor 1 (222 aa).

The Lumenal portion of the chain corresponds to 1-6 (MSLIRT). A helical transmembrane segment spans residues 7–29 (ILKLVVVVGFLSLTVQFIRHWMA). The Cytoplasmic segment spans residues 30-222 (NKQYVFTKEE…STFLTESGVL (193 aa)). The important for ligand-binding stretch occupies residues 97-104 (SLTEYVLL). A C-terminal hydrophobic region region spans residues 175 to 222 (FIPSTLGFALADTMFSTQDFLTLFYTARVYVKGMILEASTFLTESGVL).

This sequence belongs to the ERG2 family. In terms of assembly, homotrimer.

Its subcellular location is the nucleus inner membrane. It is found in the nucleus outer membrane. The protein resides in the nucleus envelope. The protein localises to the cytoplasmic vesicle. It localises to the endoplasmic reticulum membrane. Its subcellular location is the membrane. In terms of biological role, may function in lipid transport from the endoplasmic reticulum and be involved in a wide array of cellular functions probably through regulation of the biogenesis of lipid microdomains at the plasma membrane. May regulate calcium efflux at the endoplasmic reticulum. The polypeptide is Sigma non-opioid intracellular receptor 1 (sigmar1) (Danio rerio (Zebrafish)).